Here is a 285-residue protein sequence, read N- to C-terminus: tRNA (guanine-N(7)-)-methyltransferase (285 aa).

Residues Gly102, 125–126 (EI), 160–161 (NA), and Cys180 each bind S-adenosyl-L-methionine. The active site involves Asp183. Residue 258-260 (TEE) participates in S-adenosyl-L-methionine binding.

This sequence belongs to the class I-like SAM-binding methyltransferase superfamily. TrmB family. As to quaternary structure, forms a complex with TRM82.

It localises to the nucleus. It carries out the reaction guanosine(46) in tRNA + S-adenosyl-L-methionine = N(7)-methylguanosine(46) in tRNA + S-adenosyl-L-homocysteine. It functions in the pathway tRNA modification; N(7)-methylguanine-tRNA biosynthesis. Catalyzes the formation of N(7)-methylguanine at position 46 (m7G46) in tRNA. The chain is tRNA (guanine-N(7)-)-methyltransferase from Candida glabrata (strain ATCC 2001 / BCRC 20586 / JCM 3761 / NBRC 0622 / NRRL Y-65 / CBS 138) (Yeast).